Reading from the N-terminus, the 1399-residue chain is DNA-directed RNA polymerase subunit beta' (1399 aa).

4 residues coordinate Zn(2+): Cys-70, Cys-72, Cys-85, and Cys-88. Mg(2+) contacts are provided by Asp-460, Asp-462, and Asp-464. 4 residues coordinate Zn(2+): Cys-814, Cys-888, Cys-895, and Cys-898.

The protein belongs to the RNA polymerase beta' chain family. As to quaternary structure, the RNAP catalytic core consists of 2 alpha, 1 beta, 1 beta' and 1 omega subunit. When a sigma factor is associated with the core the holoenzyme is formed, which can initiate transcription. Mg(2+) serves as cofactor. Zn(2+) is required as a cofactor.

The catalysed reaction is RNA(n) + a ribonucleoside 5'-triphosphate = RNA(n+1) + diphosphate. Functionally, DNA-dependent RNA polymerase catalyzes the transcription of DNA into RNA using the four ribonucleoside triphosphates as substrates. The protein is DNA-directed RNA polymerase subunit beta' of Pseudomonas entomophila (strain L48).